The following is a 331-amino-acid chain: 4-hydroxythreonine-4-phosphate dehydrogenase (331 aa).

The substrate site is built by His137 and Thr138. A divalent metal cation is bound by residues His167, His212, and His267. 3 residues coordinate substrate: Lys275, Asn284, and Arg293.

The protein belongs to the PdxA family. As to quaternary structure, homodimer. Zn(2+) is required as a cofactor. The cofactor is Mg(2+). Requires Co(2+) as cofactor.

The protein localises to the cytoplasm. The catalysed reaction is 4-(phosphooxy)-L-threonine + NAD(+) = 3-amino-2-oxopropyl phosphate + CO2 + NADH. It functions in the pathway cofactor biosynthesis; pyridoxine 5'-phosphate biosynthesis; pyridoxine 5'-phosphate from D-erythrose 4-phosphate: step 4/5. Functionally, catalyzes the NAD(P)-dependent oxidation of 4-(phosphooxy)-L-threonine (HTP) into 2-amino-3-oxo-4-(phosphooxy)butyric acid which spontaneously decarboxylates to form 3-amino-2-oxopropyl phosphate (AHAP). This Yersinia enterocolitica serotype O:8 / biotype 1B (strain NCTC 13174 / 8081) protein is 4-hydroxythreonine-4-phosphate dehydrogenase.